Reading from the N-terminus, the 98-residue chain is MKLTSHDIIRKPIITEKSMASMAEKRYTFIVHVDANKSQIKRAVEEVFNVKVESVNTINGLGKTKRMGVHVGKRSDYKKAIVTLTEESNGIEFFEGMQ.

It belongs to the universal ribosomal protein uL23 family. As to quaternary structure, part of the 50S ribosomal subunit. Contacts protein L29, and trigger factor when it is bound to the ribosome.

Functionally, one of the early assembly proteins it binds 23S rRNA. One of the proteins that surrounds the polypeptide exit tunnel on the outside of the ribosome. Forms the main docking site for trigger factor binding to the ribosome. This Clostridium beijerinckii (strain ATCC 51743 / NCIMB 8052) (Clostridium acetobutylicum) protein is Large ribosomal subunit protein uL23.